The chain runs to 249 residues: 2,3-bisphosphoglycerate-dependent phosphoglycerate mutase (249 aa).

Substrate contacts are provided by residues 8 to 15 (RHGESAWN), 21 to 22 (TG), Arg60, 87 to 90 (ERHY), Lys98, 114 to 115 (RR), and 183 to 184 (GN). His9 functions as the Tele-phosphohistidine intermediate in the catalytic mechanism. Catalysis depends on Glu87, which acts as the Proton donor/acceptor.

It belongs to the phosphoglycerate mutase family. BPG-dependent PGAM subfamily.

It catalyses the reaction (2R)-2-phosphoglycerate = (2R)-3-phosphoglycerate. It functions in the pathway carbohydrate degradation; glycolysis; pyruvate from D-glyceraldehyde 3-phosphate: step 3/5. In terms of biological role, catalyzes the interconversion of 2-phosphoglycerate and 3-phosphoglycerate. This is 2,3-bisphosphoglycerate-dependent phosphoglycerate mutase from Methanosphaerula palustris (strain ATCC BAA-1556 / DSM 19958 / E1-9c).